The chain runs to 223 residues: MPTPPEAEKQQTGPEEADQPPSMSSHDAAPPAPPRRNPCCLCWCCCCSCSWNEERRRAWRASRESRLQPLPSCEVCATPTPTPTPTPEEVRSWAQSFDKLMHSPAGRSVFREFLRTEYSEENMLFWLACEELKAEANQHVVDEKARLIYEDYVSILSPKEVSLDSRVREGINKKMQEPSAHTFDDAQLQIYTLMHRDSYPRFLSSPAYRALLLQGASQSSSEA.

A disordered region spans residues M1 to P30. A compositionally biased stretch (low complexity) spans P20–A29. 2 positions are modified to phosphoserine: S24 and S103. The 117-residue stretch at S96–L212 folds into the RGS domain. Phosphoserine; by MAPK1 and MAPK3 is present on S157. The tract at residues L213 to A223 is interaction with GIPC.

As to quaternary structure, interacts with GIPC PDZ domain. Interacts with GNAO1. Fatty acylated. Heavily palmitoylated in the cysteine string motif. In terms of processing, phosphorylated, mainly on serine residues.

It localises to the membrane. Its function is as follows. Inhibits signal transduction by increasing the GTPase activity of G protein alpha subunits thereby driving them into their inactive GDP-bound form. Binds to G-alpha subfamily 1 members, with the order G(i)a3 &gt; G(i)a1 &gt; G(o)a &gt;&gt; G(z)a/G(i)a2. Activity on G(z)-alpha is inhibited by phosphorylation and palmitoylation of the G-protein. The protein is Regulator of G-protein signaling 19 (RGS19) of Bos taurus (Bovine).